A 183-amino-acid chain; its full sequence is dCTP deaminase (183 aa).

106 to 111 (KSTYAR) provides a ligand contact to dCTP. Catalysis depends on glutamate 132, which acts as the Proton donor/acceptor. 3 residues coordinate dCTP: glutamine 151, tyrosine 165, and glutamine 175.

The protein belongs to the dCTP deaminase family. As to quaternary structure, homotrimer.

The enzyme catalyses dCTP + H2O + H(+) = dUTP + NH4(+). The protein operates within pyrimidine metabolism; dUMP biosynthesis; dUMP from dCTP (dUTP route): step 1/2. Catalyzes the deamination of dCTP to dUTP. The protein is dCTP deaminase of Gluconobacter oxydans (strain 621H) (Gluconobacter suboxydans).